A 239-amino-acid polypeptide reads, in one-letter code: Inner kinetochore subunit MCM22 (239 aa).

It belongs to the CENP-K/MCM22 family. As to quaternary structure, component of the heterotrimeric kinetochore subcomplex CTF3, which consists of CTF3, MCM16 and MCM22. The CTF3 subcomplex is part of a larger constitutive centromere-associated network (CCAN) (also known as central kinetochore CTF19 complex in yeast), which is composed of at least AME1, CHL4, CNN1, CTF3, CTF19, IML3, MCM16, MCM21, MCM22, MHF1, MHF2, MIF2, NKP1, NKP2, OKP1 and WIP1. Interacts with CTF19.

The protein resides in the nucleus. The protein localises to the chromosome. Its subcellular location is the centromere. It is found in the kinetochore. Component of the kinetochore, a multiprotein complex that assembles on centromeric DNA and attaches chromosomes to spindle microtubules, mediating chromosome segregation and sister chromatid segregation during meiosis and mitosis. Component of the inner kinetochore constitutive centromere-associated network (CCAN), which serves as a structural platform for outer kinetochore assembly. This is Inner kinetochore subunit MCM22 (MCM22) from Saccharomyces cerevisiae (strain ATCC 204508 / S288c) (Baker's yeast).